The sequence spans 340 residues: Glucokinase (340 aa).

17–22 (GDIGGT) is an ATP binding site.

This sequence belongs to the bacterial glucokinase family.

Its subcellular location is the cytoplasm. The catalysed reaction is D-glucose + ATP = D-glucose 6-phosphate + ADP + H(+). The chain is Glucokinase from Allorhizobium ampelinum (strain ATCC BAA-846 / DSM 112012 / S4) (Agrobacterium vitis (strain S4)).